The chain runs to 45 residues: Photosystem II reaction center protein K (45 aa).

A propeptide spanning residues 1–8 (MDVNFLLS) is cleaved from the precursor. Residues 20–40 (IVDVMPAIPVFFLLLAFVWQA) form a helical membrane-spanning segment.

It belongs to the PsbK family. As to quaternary structure, PSII is composed of 1 copy each of membrane proteins PsbA, PsbB, PsbC, PsbD, PsbE, PsbF, PsbH, PsbI, PsbJ, PsbK, PsbL, PsbM, PsbT, PsbX, PsbY, PsbZ, Psb30/Ycf12, at least 3 peripheral proteins of the oxygen-evolving complex and a large number of cofactors. It forms dimeric complexes.

It localises to the plastid. The protein resides in the chloroplast thylakoid membrane. Functionally, one of the components of the core complex of photosystem II (PSII). PSII is a light-driven water:plastoquinone oxidoreductase that uses light energy to abstract electrons from H(2)O, generating O(2) and a proton gradient subsequently used for ATP formation. It consists of a core antenna complex that captures photons, and an electron transfer chain that converts photonic excitation into a charge separation. In Emiliania huxleyi (Coccolithophore), this protein is Photosystem II reaction center protein K.